Here is a 224-residue protein sequence, read N- to C-terminus: PKHD-type hydroxylase Sbal_3634 (224 aa).

One can recognise a Fe2OG dioxygenase domain in the interval 78-176; it reads QFYPPLFNRY…RTAAFMWLQS (99 aa). The Fe cation site is built by histidine 96, aspartate 98, and histidine 157. Residue arginine 167 coordinates 2-oxoglutarate.

It depends on Fe(2+) as a cofactor. Requires L-ascorbate as cofactor.

The sequence is that of PKHD-type hydroxylase Sbal_3634 from Shewanella baltica (strain OS155 / ATCC BAA-1091).